The primary structure comprises 635 residues: Early transcription factor 70 kDa subunit (635 aa).

In terms of domain architecture, Helicase ATP-binding spans 32 to 185 (RSIIDENKSV…SNIISLMSDE (154 aa)). 45–52 (HIMGSGKT) is an ATP binding site. The DEXH box signature appears at 135 to 138 (DEAH). One can recognise a Helicase C-terminal domain in the interval 326–505 (KFKYFINKIE…TLPFDIKKLL (180 aa)).

It belongs to the helicase family. VETF subfamily. In terms of assembly, heterodimer of a 70 kDa and a 82 kDa subunit. Part of the early transcription complex composed of ETF, RAP94, and the DNA-directed RNA polymerase.

Its subcellular location is the virion. Its function is as follows. Acts with RNA polymerase to initiate transcription from early gene promoters. Is recruited by the RPO-associated protein of 94 kDa (RAP94) to form the early transcription complex, which also contains the core RNA polymerase. ETF heterodimer binds to early gene promoters. The sequence is that of Early transcription factor 70 kDa subunit (VETFS) from Oryctolagus cuniculus (Rabbit).